The primary structure comprises 748 residues: Catalase-peroxidase 2 (748 aa).

Over residues 1–24 (MSSDTSDSRPPNPDTKTASTSESE) the composition is skewed to polar residues. Residues 1–43 (MSSDTSDSRPPNPDTKTASTSESENPAIPSPKPKSGAPLRNQD) form a disordered region. Positions 113–238 (WHSAGTYRIH…YGATTMGLIY (126 aa)) form a cross-link, tryptophyl-tyrosyl-methioninium (Trp-Tyr) (with M-264). Residue His114 is the Proton acceptor of the active site. A cross-link (tryptophyl-tyrosyl-methioninium (Tyr-Met) (with W-113)) is located at residues 238–264 (YVNPEGPEGQPDPLAAAHDIRETFGRM). Residue His279 participates in heme b binding.

It belongs to the peroxidase family. Peroxidase/catalase subfamily. As to quaternary structure, homotetramer. Heme b serves as cofactor. Post-translationally, formation of the three residue Trp-Tyr-Met cross-link is important for the catalase, but not the peroxidase activity of the enzyme.

The enzyme catalyses H2O2 + AH2 = A + 2 H2O. It catalyses the reaction 2 H2O2 = O2 + 2 H2O. Its function is as follows. Bifunctional enzyme with both catalase and broad-spectrum peroxidase activity. May play a role in the intracellular survival of mycobacteria. The protein is Catalase-peroxidase 2 of Mycolicibacterium smegmatis (strain ATCC 700084 / mc(2)155) (Mycobacterium smegmatis).